Consider the following 298-residue polypeptide: PYK10-binding protein 1 (298 aa).

Residue alanine 2 is modified to N-acetylalanine. Jacalin-type lectin domains lie at 2 to 142 and 152 to 295; these read AQKV…YFAP and AKQL…HVRP. Serine 20 is subject to Phosphoserine.

This sequence belongs to the jacalin lectin family. In terms of assembly, component of the PYK10 complex, at least composed of PYK10/BGLU23, BGLU21, BGLU22, JAL22, JAL23, PBP1/JAL30, PBP2/JAL31, JAL32, JAL33, JAL34, JAL35, GLL22 and GLL23. Expressed exclusively in roots.

The protein resides in the cytoplasm. In terms of biological role, inhibitor-type lectin that may regulate the correct polymerization of BGLU23/PYK10 upon tissue damage. Activates BGLU21, BGLU22 and BGLU23. This chain is PYK10-binding protein 1 (PBP1), found in Arabidopsis thaliana (Mouse-ear cress).